The following is a 449-amino-acid chain: Alpha-L-fucosidase (449 aa).

The N-terminal stretch at 1-19 (MGLLLLLSLLSACFQPRYA) is a signal peptide. 4 N-linked (GlcNAc...) asparagine glycosylation sites follow: N156, N224, N362, and N375.

It belongs to the glycosyl hydrolase 29 family. In terms of assembly, homotetramer.

The protein localises to the secreted. The catalysed reaction is an alpha-L-fucoside + H2O = L-fucose + an alcohol. Functionally, alpha-L-fucosidase is responsible for hydrolyzing the alpha-1,6-linked fucose joined to the reducing-end N-acetylglucosamine of the carbohydrate moieties of glycoproteins. In Branchiostoma floridae (Florida lancelet), this protein is Alpha-L-fucosidase.